A 283-amino-acid polypeptide reads, in one-letter code: Pantothenate synthetase (283 aa).

30–37 (MGYLHDGH) contacts ATP. The active-site Proton donor is histidine 37. (R)-pantoate is bound at residue glutamine 61. Glutamine 61 lines the beta-alanine pocket. Position 147–150 (147–150 (GKKD)) interacts with ATP. Glutamine 153 is a (R)-pantoate binding site. ATP contacts are provided by residues isoleucine 176 and 184–187 (MSSR).

Belongs to the pantothenate synthetase family. Homodimer.

The protein localises to the cytoplasm. It catalyses the reaction (R)-pantoate + beta-alanine + ATP = (R)-pantothenate + AMP + diphosphate + H(+). The protein operates within cofactor biosynthesis; (R)-pantothenate biosynthesis; (R)-pantothenate from (R)-pantoate and beta-alanine: step 1/1. In terms of biological role, catalyzes the condensation of pantoate with beta-alanine in an ATP-dependent reaction via a pantoyl-adenylate intermediate. This Geobacter sulfurreducens (strain ATCC 51573 / DSM 12127 / PCA) protein is Pantothenate synthetase.